A 242-amino-acid chain; its full sequence is Protein MHF1 homolog (242 aa).

The tract at residues leucine 208 to leucine 242 is disordered. Polar residues predominate over residues serine 231–leucine 242.

It belongs to the TAF9 family. CENP-S/MHF1 subfamily.

The protein localises to the nucleus. Involved in the promotion of spontaneous somatic homologous recombination (HR) events, which is opposite to the function of FANCM in ordered HR. Only FANCM is essential for replicative repair in the absence of the endonuclease MUS81. Acts in the same pathway as FANCM to restrain class II meiotic crossing over (CO), and acts with FANCM during meiosis to repair interstrand cross-links (ICLs). This common pathway between MHF1 and FANCM is in parallel to the pathway that involves the RECQ4A helicase. This Arabidopsis thaliana (Mouse-ear cress) protein is Protein MHF1 homolog.